The following is a 297-amino-acid chain: PsbP domain-containing protein 5, chloroplastic (297 aa).

The protein belongs to the PsbP family.

It localises to the plastid. The protein resides in the chloroplast thylakoid lumen. In terms of biological role, involved in strigolactone biosynthesis. The chain is PsbP domain-containing protein 5, chloroplastic (PPD5) from Arabidopsis thaliana (Mouse-ear cress).